The chain runs to 453 residues: Sodium/alanine symporter AgcS (453 aa).

Residues 1–17 (MDFVSLVNTVNSFVWGP) are Extracellular-facing. The helical transmembrane segment at 18-32 (YMLVLLLGTGIFLTL) threads the bilayer. Residues 33-67 (RLGFMQIHTLPYALKLAFSKHQDETSEGDISHFQA) are Cytoplasmic-facing. A helical transmembrane segment spans residues 68–89 (LMTALAATIGTGNIAGVATAYV). D-alanine is bound at residue T75. 2 residues coordinate L-alanine: T75 and G79. N80 provides a ligand contact to D-alanine. The Extracellular portion of the chain corresponds to 90–92 (LGG). Residues 93–111 (PGAIFWMWVTAFFGMATKY) form a helical membrane-spanning segment. Residues 112-148 (AEAVLAIKYRTVDDNGEMAGGPMYFLEKGLPDHGLGK) lie on the Cytoplasmic side of the membrane. A helical membrane pass occupies residues 149–179 (ILGVAFAFFGAFAAFGIGNMVQTNSVADAVA). Residue Q170 coordinates D-alanine. Residue Q170 participates in L-alanine binding. Residues 180-186 (SNFGVDP) lie on the Extracellular side of the membrane. A helical membrane pass occupies residues 187–202 (LITGFVLAIFTAAVIL). Residues 203–206 (GGIK) lie on the Cytoplasmic side of the membrane. The helical transmembrane segment at 207 to 233 (SIGKATGIIVPFMAVFYILAGLVILAM) threads the bilayer. Topologically, residues 234–258 (NIGYIIPAFGTIFSSAFNFSAGFGA) are extracellular. The helical transmembrane segment at 259-274 (LIGTAIMWGVKRGVFS) threads the bilayer. Residue 273 to 274 (FS) coordinates D-alanine. 273–276 (FSNE) is an L-alanine binding site. Over 275–300 (NEAGLGSAPIAAAAAKTDHPGRQALV) the chain is Cytoplasmic. A helical transmembrane segment spans residues 301 to 322 (SMTGTFLDTIVVCTITGLVLTI). At 323–350 (AGLKAFPGLTDLTGASLTAASFDALMPM) the chain is on the extracellular side. Residues 351–378 (GGLIVTIGLVFFAYSTVLGWSYYGEKCF) traverse the membrane as a helical segment. Residues 379–386 (EYLIGTKG) lie on the Cytoplasmic side of the membrane. The chain crosses the membrane as a helical span at residues 387–403 (IRLYRIAFVLVAFWGAT). The Extracellular portion of the chain corresponds to 404-408 (ASLPL). Residues 409 to 430 (VWNIADTLNGAMAIPNLIGLLL) form a helical membrane-spanning segment. Topologically, residues 431 to 453 (LSGVVVSETKAFNEIRKNEAKNA) are cytoplasmic.

Belongs to the alanine or glycine:cation symporter (AGCS) (TC 2.A.25) family.

It localises to the cell membrane. It carries out the reaction D-alanine(in) + Na(+)(in) = D-alanine(out) + Na(+)(out). The enzyme catalyses L-alanine(in) + Na(+)(in) = L-alanine(out) + Na(+)(out). It catalyses the reaction glycine(in) + Na(+)(in) = glycine(out) + Na(+)(out). Catalyzes the sodium-dependent uptake of extracellular D-alanine and L-alanine. Can also transport glycine. Binds glycine and both enantiomers of alanine, while strictly excluding other amino acids. In Methanococcus maripaludis (strain DSM 14266 / JCM 13030 / NBRC 101832 / S2 / LL), this protein is Sodium/alanine symporter AgcS.